We begin with the raw amino-acid sequence, 363 residues long: Anhydro-N-acetylmuramic acid kinase (363 aa).

ATP is bound at residue 10–17 (GTSLDGMD).

It belongs to the anhydro-N-acetylmuramic acid kinase family.

It catalyses the reaction 1,6-anhydro-N-acetyl-beta-muramate + ATP + H2O = N-acetyl-D-muramate 6-phosphate + ADP + H(+). The protein operates within amino-sugar metabolism; 1,6-anhydro-N-acetylmuramate degradation. It participates in cell wall biogenesis; peptidoglycan recycling. Its function is as follows. Catalyzes the specific phosphorylation of 1,6-anhydro-N-acetylmuramic acid (anhMurNAc) with the simultaneous cleavage of the 1,6-anhydro ring, generating MurNAc-6-P. Is required for the utilization of anhMurNAc either imported from the medium or derived from its own cell wall murein, and thus plays a role in cell wall recycling. Contributes to intrinsic fosfomycin resistance in P.aeruginosa. This chain is Anhydro-N-acetylmuramic acid kinase, found in Pseudomonas aeruginosa (strain ATCC 15692 / DSM 22644 / CIP 104116 / JCM 14847 / LMG 12228 / 1C / PRS 101 / PAO1).